We begin with the raw amino-acid sequence, 544 residues long: CTP synthase (544 aa).

The interval 1–265 (MTKFIFVTGG…DDIICEHLDL (265 aa)) is amidoligase domain. S13 is a binding site for CTP. S13 is a binding site for UTP. ATP-binding positions include 14–19 (SLGKGI) and D71. Mg(2+) contacts are provided by D71 and E139. Residues 146–148 (DIE), 186–191 (KTKPTQ), and K222 each bind CTP. UTP contacts are provided by residues 186 to 191 (KTKPTQ) and K222. A Glutamine amidotransferase type-1 domain is found at 290 to 542 (NIAMVGKYVD…VEAALAYQAD (253 aa)). Residue G351 participates in L-glutamine binding. C378 functions as the Nucleophile; for glutamine hydrolysis in the catalytic mechanism. Residues 379-382 (LGMQ), E402, and R469 contribute to the L-glutamine site. Catalysis depends on residues H515 and E517.

Belongs to the CTP synthase family. Homotetramer.

It catalyses the reaction UTP + L-glutamine + ATP + H2O = CTP + L-glutamate + ADP + phosphate + 2 H(+). The catalysed reaction is L-glutamine + H2O = L-glutamate + NH4(+). It carries out the reaction UTP + NH4(+) + ATP = CTP + ADP + phosphate + 2 H(+). It participates in pyrimidine metabolism; CTP biosynthesis via de novo pathway; CTP from UDP: step 2/2. With respect to regulation, allosterically activated by GTP, when glutamine is the substrate; GTP has no effect on the reaction when ammonia is the substrate. The allosteric effector GTP functions by stabilizing the protein conformation that binds the tetrahedral intermediate(s) formed during glutamine hydrolysis. Inhibited by the product CTP, via allosteric rather than competitive inhibition. Catalyzes the ATP-dependent amination of UTP to CTP with either L-glutamine or ammonia as the source of nitrogen. Regulates intracellular CTP levels through interactions with the four ribonucleotide triphosphates. This chain is CTP synthase, found in Laribacter hongkongensis (strain HLHK9).